A 338-amino-acid chain; its full sequence is Glycerol-3-phosphate dehydrogenase [NAD(P)+] (338 aa).

NADPH is bound by residues S13, W14, and K108. 3 residues coordinate sn-glycerol 3-phosphate: K108, G139, and S141. A143 contributes to the NADPH binding site. Sn-glycerol 3-phosphate-binding residues include K194, D247, S257, R258, and N259. K194 serves as the catalytic Proton acceptor. An NADPH-binding site is contributed by R258. NADPH is bound by residues V282 and E284.

It is found in the cytoplasm. It carries out the reaction sn-glycerol 3-phosphate + NAD(+) = dihydroxyacetone phosphate + NADH + H(+). The catalysed reaction is sn-glycerol 3-phosphate + NADP(+) = dihydroxyacetone phosphate + NADPH + H(+). Its pathway is membrane lipid metabolism; glycerophospholipid metabolism. Functionally, catalyzes the reduction of the glycolytic intermediate dihydroxyacetone phosphate (DHAP) to sn-glycerol 3-phosphate (G3P), the key precursor for phospholipid synthesis. This is Glycerol-3-phosphate dehydrogenase [NAD(P)+] from Streptococcus pyogenes serotype M6 (strain ATCC BAA-946 / MGAS10394).